Reading from the N-terminus, the 227-residue chain is UPF0173 metal-dependent hydrolase BCG9842_B0515 (227 aa).

This sequence belongs to the UPF0173 family.

The protein is UPF0173 metal-dependent hydrolase BCG9842_B0515 of Bacillus cereus (strain G9842).